Here is a 252-residue protein sequence, read N- to C-terminus: Protein lin-28 homolog B (252 aa).

The tract at residues 1-30 is disordered; sequence MAEGGAARGTREEQGKLPEQEEEEEEDPQV. Positions 9-19 are enriched in basic and acidic residues; it reads GTREEQGKLPE. Residues 32–105 form the CSD domain; sequence LGSGHCKWFN…GFESLRVTGP (74 aa). 2 CCHC-type zinc fingers span residues 130–147 and 152–169; these read DRCY…ECNL and KKCH…NCPH. Positions 132, 135, 140, 145, 154, 157, 162, and 167 each coordinate Zn(2+). Residues 172 to 252 form a disordered region; that stretch reads VPQHPTTSQG…KGPSVQKKKK (81 aa). Residues 213–222 are compositionally biased toward basic and acidic residues; that stretch reads GRSELSERSS. A compositionally biased stretch (polar residues) spans 225–238; the sequence is PQEASLSKISTSPE.

Belongs to the lin-28 family.

It is found in the nucleus. The protein resides in the nucleolus. Functionally, suppressor of specific microRNA (miRNA) biogenesis. Binds target primary miRNA transcripts and sequester them in the nucleolus, away from the microprocessor complex, hence preventing their processing into mature miRNA. The specific interaction with target pri-miRNAs occurs via an 5'-GGAG-3' motif in the pre-miRNA terminal loop. This is Protein lin-28 homolog B (lin28b) from Xenopus laevis (African clawed frog).